We begin with the raw amino-acid sequence, 256 residues long: F-actin-capping protein subunit beta (256 aa).

The residue at position 1 (methionine 1) is an N-acetylmethionine.

The protein belongs to the F-actin-capping protein beta subunit family. Component of the F-actin capping complex, composed of a heterodimer of an alpha and a beta subunit.

Its subcellular location is the cytoplasm. The protein localises to the cytoskeleton. Functionally, F-actin-capping proteins bind in a Ca(2+)-independent manner to the fast growing ends of actin filaments (barbed end) thereby blocking the exchange of subunits at these ends. Unlike other capping proteins (such as gelsolin and severin), these proteins do not sever actin filaments. The chain is F-actin-capping protein subunit beta from Arabidopsis thaliana (Mouse-ear cress).